The chain runs to 142 residues: MKIHIIARGRIGRSPEGELVERYMKRLSWPYRITELPDRASNAPLPPAPPHSITVAMDEKGKTWRSMEFAQKIGNWQDEGRSEIRFLIGAADGLREEERAAADMYFAFGAATWPHMLARAMLAEQLWRASAILSGHPYHREG.

Gly89 contacts S-adenosyl-L-methionine.

This sequence belongs to the RNA methyltransferase RlmH family. Homodimer.

The protein localises to the cytoplasm. It carries out the reaction pseudouridine(1915) in 23S rRNA + S-adenosyl-L-methionine = N(3)-methylpseudouridine(1915) in 23S rRNA + S-adenosyl-L-homocysteine + H(+). Specifically methylates the pseudouridine at position 1915 (m3Psi1915) in 23S rRNA. The sequence is that of Ribosomal RNA large subunit methyltransferase H from Zymomonas mobilis subsp. mobilis (strain ATCC 31821 / ZM4 / CP4).